A 577-amino-acid chain; its full sequence is Outer spore wall assembly protein SHE10 (577 aa).

Positions 1–23 (MGKLIKLITTLTVLVSLLQYCCE) are cleaved as a signal peptide. 2 coiled-coil regions span residues 379 to 416 (NETR…ENVE) and 513 to 561 (ILRS…EEDV). The segment covering 525–545 (RERKERERKEREKAAAEEFQR) has biased composition (basic and acidic residues). Positions 525–577 (RERKERERKEREKAAAEEFQRQQELLRQQEEEDEEDVSYTSTSTITTTTTMTL) are disordered. The segment covering 562–577 (SYTSTSTITTTTTMTL) has biased composition (low complexity).

It belongs to the SHE10 family. Component of the mitochondria-localized RNase mitochondrial RNA-processing (RNase MRP) composed of one single RNA encoded by the NME1 gene and at least 31 proteins. Absent in the nucleus-localized RNase MRP (NuMRP).

It is found in the mitochondrion. In terms of biological role, involved in spore wall assembly. May be a component of the mitochondrial RNase MRP (MtMRP), a ribonucleoprotein endoribonuclease involved in the cleaving RNA transcripts to generate primers for DNA replication in mitochondria. The protein is Outer spore wall assembly protein SHE10 of Saccharomyces cerevisiae (strain Lalvin EC1118 / Prise de mousse) (Baker's yeast).